A 185-amino-acid polypeptide reads, in one-letter code: Ribosome-recycling factor (185 aa).

This sequence belongs to the RRF family.

The protein resides in the cytoplasm. In terms of biological role, responsible for the release of ribosomes from messenger RNA at the termination of protein biosynthesis. May increase the efficiency of translation by recycling ribosomes from one round of translation to another. This is Ribosome-recycling factor from Serratia proteamaculans (strain 568).